Consider the following 171-residue polypeptide: Voltage-dependent P/Q-type calcium channel subunit alpha-1A (171 aa).

A helical transmembrane segment spans residues 1-11 (FVTVLGSITDI). An IV repeat occupies 1-171 (FVTVLGSITD…LMLNLFVAVI (171 aa)). Residues 12-18 (LVTEFGN) lie on the Extracellular side of the membrane. A helical transmembrane segment spans residues 19–37 (NFINLSFLRLFRAARLIKL). The Cytoplasmic segment spans residues 38 to 56 (LRQGYTIRILLWTFVQSFK). A helical membrane pass occupies residues 57-76 (ALPYVCLLIAMLFFIYAIIG). Topologically, residues 77–143 (MQVFGNIGIE…ENSGIKEDEC (67 aa)) are extracellular. A helical membrane pass occupies residues 144 to 168 (GNEFAYFYFVSFIFLCSFLMLNLFV). Topologically, residues 169-171 (AVI) are cytoplasmic.

This sequence belongs to the calcium channel alpha-1 subunit (TC 1.A.1.11) family. CACNA1A subfamily. In terms of assembly, voltage-dependent calcium channels are multisubunit complexes, consisting of alpha-1, alpha-2, beta and delta subunits in a 1:1:1:1 ratio. The channel activity is directed by the pore-forming and voltage-sensitive alpha-1 subunit. In many cases, this subunit is sufficient to generate voltage-sensitive calcium channel activity. The auxiliary subunits beta and alpha-2/delta linked by a disulfide bridge regulate the channel activity.

The protein localises to the cell membrane. The enzyme catalyses Ca(2+)(in) = Ca(2+)(out). In terms of biological role, the isoform alpha-1A gives rise to P and/or Q-type calcium currents. P/Q-type calcium channels belong to the 'high-voltage activated' (HVA) group. The sequence is that of Voltage-dependent P/Q-type calcium channel subunit alpha-1A (CACNA1A) from Gallus gallus (Chicken).